The sequence spans 700 residues: Polyphosphate kinase (700 aa).

N45 provides a ligand contact to ATP. Mg(2+) contacts are provided by R373 and R403. In terms of domain architecture, PLD phosphodiesterase 1 spans 428–462; sequence PGMKIHAKLLLITRREEQGFVRYAHIGTGNFHERT. The active-site Phosphohistidine intermediate is H433. ATP is bound by residues Y466, R562, and H590. Positions 585 to 615 constitute a PLD phosphodiesterase 2 domain; the sequence is DRFLEHPRVLVVHNDGDPQVFISSADWMERN.

Belongs to the polyphosphate kinase 1 (PPK1) family. It depends on Mg(2+) as a cofactor. Post-translationally, an intermediate of this reaction is the autophosphorylated ppk in which a phosphate is covalently linked to a histidine residue through a N-P bond.

The catalysed reaction is [phosphate](n) + ATP = [phosphate](n+1) + ADP. Functionally, catalyzes the reversible transfer of the terminal phosphate of ATP to form a long-chain polyphosphate (polyP). In Vibrio vulnificus (strain CMCP6), this protein is Polyphosphate kinase.